Here is a 271-residue protein sequence, read N- to C-terminus: Phosphonoacetaldehyde hydrolase (271 aa).

The Nucleophile role is filled by Asp-12. Residues Asp-12 and Ala-14 each contribute to the Mg(2+) site. Lys-54 acts as the Schiff-base intermediate with substrate in catalysis. Mg(2+) is bound at residue Asp-188.

Belongs to the HAD-like hydrolase superfamily. PhnX family. As to quaternary structure, homodimer. Requires Mg(2+) as cofactor.

It catalyses the reaction phosphonoacetaldehyde + H2O = acetaldehyde + phosphate + H(+). Its function is as follows. Involved in phosphonate degradation. The polypeptide is Phosphonoacetaldehyde hydrolase (Vibrio vulnificus (strain CMCP6)).